We begin with the raw amino-acid sequence, 291 residues long: MSSIYKALAGKSKDNKSEKKQGNVKQFMNKQRTLLISSRGVNYRHRHLIQDLSGLLPHSRKEPKLDTKKDLQQLNEIAELYNCNNVLFFEARKHQDLYLWLSKPPNGPTIKFYIQNLHTMDELNFTGNCLKGSRPVLSFDQRFESSPHYQLIKELLVHNFGVPPNARKSKPFIDHVMSFSIVDDKIWVRTYEISHSTKNKEEYEDGEEDISLVEIGPRFVMTVILILEGSFGGPKIYENKQYVSPNVVRAQIKQQAAEEAKSRAEAAVERKIKRRENVLAADPLSNDALFK.

The region spanning 31 to 232 (QRTLLISSRG…VILILEGSFG (202 aa)) is the Brix domain. Serine 285 is subject to Phosphoserine.

It belongs to the BRX1 family. In terms of assembly, part of a complex that includes BRX1, RPF1, RPF2 and SSF1 or SSF2.

It is found in the nucleus. Its subcellular location is the nucleolus. In terms of biological role, required for biogenesis of the 60S ribosomal subunit. The polypeptide is Ribosome biogenesis protein BRX1 (BRX1) (Saccharomyces cerevisiae (strain ATCC 204508 / S288c) (Baker's yeast)).